Reading from the N-terminus, the 94-residue chain is Defensin alpha 5 (94 aa).

The first 19 residues, 1–19 (MRTIAILAAILLVALQAQA), serve as a signal peptide directing secretion. 3 disulfide bridges follow: cysteine 65–cysteine 93, cysteine 67–cysteine 82, and cysteine 72–cysteine 92.

It belongs to the alpha-defensin family. As to quaternary structure, homodimer. Homotetramer. Interacts with B.antracis lef/lethal factor. Glycosylated. Post-translationally, proteolytically cleaved at Arg-62 by trypsin. Both the propeptide form proHD5/HD5(20-94) and HD5(56-94) are cleaved into the lumenal peptide form HD5(63-94) by trypsin. Unprocessed proHD5 exerts antimicrobial activities, but peptide potency is enhanced by peptide processing. Proteolytically cleaved in duodenal fluid; derived fragments are antimicrobially active against commensal bacteria (in vitro). In terms of processing, (Microbial infection) The disulfide bridges and homodimerization are a prerequisite for the enhancement of S.flexneri adhesion and invasion. Expressed in the gastrointestinal, reproductive, and urinary tracts (at protein level). Expressed in Paneth cells of the small intestine (at protein level). Expressed throughout the urothelium of the lower urinary tract and in the collecting tubules of the kidney (at protein level). Expressed in stratified squamous epithelial cells of the female genital tract epithelia, such as in vagina, ectocervix, endocervix, endometrium, and fallopian tube (at protein level). Endometrial expression correlates with stages of the menstrual cycle: Expression is low during the early proliferative phase, increased during the mid- to late proliferative phase, peaks during the early secretory phase of the cycle, and decreases during the mid- to late secretory phase.

The protein localises to the secreted. The protein resides in the cytoplasmic vesicle. Its subcellular location is the secretory vesicle. Functionally, host-defense peptide that maintains sterility in the urogenital system. Has antimicrobial activity against a wide range of bacteria, including Gram-negative E.coli, P.aeruginosa and S.typhimurium, and Gram-positive E.aerogenes, S.aureus, B.cereus, E.faecium and L.monocytogenes. Confers resistance to intestinal infection by S.typhimurium. Exhibits antimicrobial activity against enteric commensal bacteria such as B.adolescentis, L.acidophilus, B.breve, L.fermentum, B.longum and S.thermophilus. Binds to bacterial membranes and causes membrane disintegration. Induces the secretion of the chemokine IL-8 by intestinal epithelial cells. Binds to B.antracis lef/lethal factor, a major virulence factor from B.anthracis, and neutralizes its enzymatic activity. (Microbial infection) Acts as a target for S.flexneri infection by binding to the bacterium, possibly via bacterial surface proteins, and thereby augmenting infectivity via enhanced bacterial adhesion and invasion of epithelial cells and tissues. This Homo sapiens (Human) protein is Defensin alpha 5 (DEFA5).